The primary structure comprises 521 residues: Probable cytochrome P450 12d1 distal, mitochondrial (521 aa).

The transit peptide at 1-19 (MNTLSSARSVAIYVGPVRS) directs the protein to the mitochondrion. Residue C467 participates in heme binding.

Belongs to the cytochrome P450 family. The cofactor is heme.

The protein resides in the mitochondrion membrane. The chain is Probable cytochrome P450 12d1 distal, mitochondrial from Drosophila melanogaster (Fruit fly).